The sequence spans 533 residues: Leucine-rich glioma-inactivated protein 1 (533 aa).

The N-terminal stretch at 1–34 (MESERSQRMGNACIPLKRIAYCLCLLSALLLTEG) is a signal peptide. The LRRNT domain occupies 35–72 (KKPAKPKCPAVCTCTKDNALCENARSIPRTVPPDVISL). LRR repeat units follow at residues 92 to 113 (HLEY…TFRG) and 116 to 137 (SLIH…IFKG). The LRRCT domain occupies 149–199 (NSFNCDCKLKWLVEWLSHTNATVEDIYCEGPPEYKKRKINSLSSKDFDCII). N168 is a glycosylation site (N-linked (GlcNAc...) asparagine). 7 EAR repeats span residues 201-243 (EFAK…EWDH), 247-289 (TFRN…KRDS), 293-340 (KFIK…KWNG), 342-391 (GFYS…QWNK), 395-438 (LFTN…KWGG), 440-482 (SFQD…NWDA), and 486-528 (KFVK…KHVI). An N-linked (GlcNAc...) asparagine glycan is attached at N253. N398 carries an N-linked (GlcNAc...) asparagine glycan.

As to quaternary structure, oligomer. Interacts with KCNA1 within a complex containing KCNA1, KCNA4 and KCNAB1. Part of a complex containing ADAM22, DLG4/PSD95 and CACNG2 (stargazin). Can bind to ADAM11 and ADAM23. In terms of processing, glycosylated.

Its subcellular location is the secreted. It localises to the synapse. The protein resides in the cytoplasm. Functionally, regulates voltage-gated potassium channels assembled from KCNA1, KCNA4 and KCNAB1. It slows down channel inactivation by precluding channel closure mediated by the KCNAB1 subunit. Ligand for ADAM22 that positively regulates synaptic transmission mediated by AMPA-type glutamate receptors. Plays a role in suppressing the production of MMP1/3 through the phosphatidylinositol 3-kinase/ERK pathway. The polypeptide is Leucine-rich glioma-inactivated protein 1 (LGI1) (Bos taurus (Bovine)).